Consider the following 268-residue polypeptide: Interleukin-2 receptor subunit alpha (268 aa).

Positions 1 to 21 (MEPCLLMWGILTFITVSGYTT) are cleaved as a signal peptide. Residues 22–81 (DLCDDDPPNLKHATFKALTYKTGTVLNCDCERGFRRISSYMHCTGNSSHASWENKCRCKS) form the Sushi 1 domain. Over 22–237 (DLCDDDPPNL…ESFIFTTEYQ (216 aa)) the chain is Extracellular. 3 disulfides stabilise this stretch: Cys24/Cys64, Cys49/Cys77, and Cys51/Cys79. Asn67 is a glycosylation site (N-linked (GlcNAc...) asparagine). Residues 83–112 (SPENRKGKVTTKPEEQKGENPTEMQSQTPP) form a disordered region. The span at 85-102 (ENRKGKVTTKPEEQKGEN) shows a compositional bias: basic and acidic residues. One can recognise a Sushi 2 domain in the interval 120 to 183 (GHCREPPPWE…WTQPPLKCIS (64 aa)). 2 cysteine pairs are disulfide-bonded: Cys122-Cys165 and Cys149-Cys181. The disordered stretch occupies residues 186 to 213 (QFPDDEELQASTDAPAGRDTSSPFITTS). Over residues 204-213 (DTSSPFITTS) the composition is skewed to polar residues. Residues 238–258 (IAVASCVLLLISIVLLSGLTW) traverse the membrane as a helical segment. The Cytoplasmic portion of the chain corresponds to 259 to 268 (QRRRRKSRTI).

In terms of assembly, non-covalent dimer of an alpha and a beta subunit. IL2R exists in 3 different forms: a high affinity dimer, an intermediate affinity monomer (beta subunit), and a low affinity monomer (alpha subunit). The high and intermediate affinity forms also associate with a gamma subunit.

It is found in the membrane. Its function is as follows. Receptor for interleukin-2. The receptor is involved in the regulation of immune tolerance by controlling regulatory T cells (TREGs) activity. TREGs suppress the activation and expansion of autoreactive T-cells. The protein is Interleukin-2 receptor subunit alpha (IL2RA) of Canis lupus familiaris (Dog).